Reading from the N-terminus, the 1375-residue chain is DNA-directed RNA polymerase subunit beta' (1375 aa).

The Zn(2+) site is built by Cys-70, Cys-72, Cys-85, and Cys-88. The Mg(2+) site is built by Asp-460, Asp-462, and Asp-464. Residues Cys-800, Cys-874, Cys-881, and Cys-884 each contribute to the Zn(2+) site.

It belongs to the RNA polymerase beta' chain family. The RNAP catalytic core consists of 2 alpha, 1 beta, 1 beta' and 1 omega subunit. When a sigma factor is associated with the core the holoenzyme is formed, which can initiate transcription. It depends on Mg(2+) as a cofactor. The cofactor is Zn(2+).

It carries out the reaction RNA(n) + a ribonucleoside 5'-triphosphate = RNA(n+1) + diphosphate. DNA-dependent RNA polymerase catalyzes the transcription of DNA into RNA using the four ribonucleoside triphosphates as substrates. This is DNA-directed RNA polymerase subunit beta' from Bdellovibrio bacteriovorus (strain ATCC 15356 / DSM 50701 / NCIMB 9529 / HD100).